The primary structure comprises 161 residues: ATP synthase subunit b' (161 aa).

A helical transmembrane segment spans residues 26–45 (LPLMAIQFLLLAFVLDKIFY).

Belongs to the ATPase B chain family. In terms of assembly, F-type ATPases have 2 components, F(1) - the catalytic core - and F(0) - the membrane proton channel. F(1) has five subunits: alpha(3), beta(3), gamma(1), delta(1), epsilon(1). F(0) has four main subunits: a(1), b(1), b'(1) and c(10-14). The alpha and beta chains form an alternating ring which encloses part of the gamma chain. F(1) is attached to F(0) by a central stalk formed by the gamma and epsilon chains, while a peripheral stalk is formed by the delta, b and b' chains.

Its subcellular location is the cellular thylakoid membrane. F(1)F(0) ATP synthase produces ATP from ADP in the presence of a proton or sodium gradient. F-type ATPases consist of two structural domains, F(1) containing the extramembraneous catalytic core and F(0) containing the membrane proton channel, linked together by a central stalk and a peripheral stalk. During catalysis, ATP synthesis in the catalytic domain of F(1) is coupled via a rotary mechanism of the central stalk subunits to proton translocation. Functionally, component of the F(0) channel, it forms part of the peripheral stalk, linking F(1) to F(0). The b'-subunit is a diverged and duplicated form of b found in plants and photosynthetic bacteria. This Trichodesmium erythraeum (strain IMS101) protein is ATP synthase subunit b'.